The sequence spans 61 residues: Small ribosomal subunit protein uS14 (61 aa).

Positions 24, 27, 40, and 43 each coordinate Zn(2+).

It belongs to the universal ribosomal protein uS14 family. Zinc-binding uS14 subfamily. Part of the 30S ribosomal subunit. Contacts proteins S3 and S10. The cofactor is Zn(2+).

In terms of biological role, binds 16S rRNA, required for the assembly of 30S particles and may also be responsible for determining the conformation of the 16S rRNA at the A site. The chain is Small ribosomal subunit protein uS14 from Desulfovibrio desulfuricans (strain ATCC 27774 / DSM 6949 / MB).